Here is a 425-residue protein sequence, read N- to C-terminus: MALILNIDAREIIDSRGNPTVEVDVLLDDGSFGRAAVPSGASTGVHEAHELRDGGERYQGKGVLNAVKNVIEDIDEELMGVEADDQRLIDQLMRDLDGTENKSKLGANAILGVSMAVARAAAESADLPLFRYVGGPNAHVLPVPMMNILNGGAHADSGVDVQEFMIAPIGAETFSEALRVGAEVYHTLKKVIKDKGLSTGLGDEGGFAPSVDSTKAALDLIVEAIEKAGFKVGEDVALALDVASSEFFKDGKYHFEGGEHTAEEMAKVYEDLIEEYPIVSIEDPLQEDDWEGYTALTAKIGDKVQLVGDDFFVTNPQRLAKGIEEKAANALLVKVNQIGTLTETFDAVELAHRNGYRSMMSHRSGETEDTTIADLAVALNCGQIKTGAPARSERVAKYNQLLRIEEILGDAAVYAGRSAFPRFTK.

Gln162 serves as a coordination point for (2R)-2-phosphoglycerate. Glu204 (proton donor) is an active-site residue. Residues Asp241, Glu282, and Asp309 each contribute to the Mg(2+) site. Residues Lys334, Arg363, Ser364, and Lys385 each contribute to the (2R)-2-phosphoglycerate site. Lys334 functions as the Proton acceptor in the catalytic mechanism.

Belongs to the enolase family. It depends on Mg(2+) as a cofactor.

The protein localises to the cytoplasm. It localises to the secreted. The protein resides in the cell surface. The catalysed reaction is (2R)-2-phosphoglycerate = phosphoenolpyruvate + H2O. It participates in carbohydrate degradation; glycolysis; pyruvate from D-glyceraldehyde 3-phosphate: step 4/5. Catalyzes the reversible conversion of 2-phosphoglycerate (2-PG) into phosphoenolpyruvate (PEP). It is essential for the degradation of carbohydrates via glycolysis. The chain is Enolase from Corynebacterium jeikeium (strain K411).